Consider the following 444-residue polypeptide: MARSRSRIDRTPFQTEILDLSHDGRGVARREGEGGKVTFVSGALPGEVVMAEQTARSRHFDEARTVEVLKASPQRVTPKCPHFGTCAGCVLQHLDEDQQIVAKQRVLMDNLERIGHVKPGTVLAPLVGESWGYRRKGRFSVRRVEKKDKTLVGFREQDPRFVADLSQCLTVIPEIGTKVEALSTFIESLDGKRDIPQIEFIAGDQAVVLTVRHLQPLSDADRAAWATFGQQHGFVIYLQSGGVDTVQPLDGQGVPLSFRLAPWDVELAFRPLDFIQVNAKLNEKMIAHALDLLEPGEDERVLDLFCGLGNFTLPLARRVREVVGVEGDAGLVARARENAERNGLANAQFFSADLTQDQRSTAWMRQGFDKLLLDPPRSGAIEVLQQLPLKQFKRIVYVSCHPGSLARDAGYLVNEQGFTLVSAGAMDMFPHTAHVESIAVFEKR.

The region spanning 5–67 is the TRAM domain; it reads RSRIDRTPFQ…RHFDEARTVE (63 aa). [4Fe-4S] cluster contacts are provided by Cys-80, Cys-86, Cys-89, and Cys-168. S-adenosyl-L-methionine is bound by residues Gln-276, Phe-305, Asn-310, Glu-326, Asp-353, and Asp-374. Cys-400 functions as the Nucleophile in the catalytic mechanism.

It belongs to the class I-like SAM-binding methyltransferase superfamily. RNA M5U methyltransferase family. RlmD subfamily.

It catalyses the reaction uridine(1939) in 23S rRNA + S-adenosyl-L-methionine = 5-methyluridine(1939) in 23S rRNA + S-adenosyl-L-homocysteine + H(+). In terms of biological role, catalyzes the formation of 5-methyl-uridine at position 1939 (m5U1939) in 23S rRNA. In Stenotrophomonas maltophilia (strain R551-3), this protein is 23S rRNA (uracil(1939)-C(5))-methyltransferase RlmD.